The primary structure comprises 2126 residues: Serine/threonine-protein kinase WNK1 (2126 aa).

2 disordered regions span residues 1–80 and 93–202; these read MSDG…FFRR and LPGL…QQQD. Ser-17 carries the post-translational modification Phosphoserine. Residues 48–64 are compositionally biased toward basic and acidic residues; the sequence is RTEEYRRRRHTMDKDSR. Thr-58 carries the phosphothreonine modification. Composition is skewed to low complexity over residues 101–111 and 127–141; these read PQPSVPAVVPQ and VASQ…AASP. Residues Ser-165 and Ser-172 each carry the phosphoserine modification. Residues 221 to 479 form the Protein kinase domain; it reads LKFDIEIGRG…IKDLLNHAFF (259 aa). Residue Ser-231 participates in ATP binding. Positions 283 and 299 each coordinate chloride. ATP-binding positions include 301–304 and Lys-351; that span reads TELM. The active-site Proton acceptor is the Asp-368. Leu-369 and Leu-371 together coordinate chloride. Phosphoserine; by autocatalysis occurs at positions 378 and 382. The autoinhibitory domain stretch occupies residues 488 to 555; that stretch reads ELAEEDDGEK…VCEGDHKTMA (68 aa). Basic and acidic residues predominate over residues 573 to 588; that stretch reads QLVREEQEKRKQEESS. Residues 573–865 are disordered; sequence QLVREEQEKR…SRHEKTSRPK (293 aa). The span at 593–614 shows a compositional bias: polar residues; the sequence is NEQQASVSQAGIQPLSVASTGI. The segment covering 615-626 has biased composition (low complexity); that stretch reads PTAPTTSASVST. Residues 629–639 are interaction with KLHL3; the sequence is EPEEPEADQHQ. Polar residues-rich tracts occupy residues 638–682, 695–705, and 713–733; these read HQQL…GSQH, TVSSIQAQSQP, and SMAQ…VLSS. Low complexity predominate over residues 734–746; it reads QPVQHPQQQGIQP. Positions 750-789 are enriched in polar residues; the sequence is PQQAVQYSLPQAASSSEGTVQPVSQPQVSAGTQSSTQGVS. The segment covering 793-823 has biased composition (low complexity); sequence PPEQTPITQSQPTQPVPLVSSVDSAHSDVAS. A compositionally biased stretch (polar residues) spans 826 to 836; sequence SDGNENAPSSS. A compositionally biased stretch (basic residues) spans 844–865; that stretch reads TKRHYRKSVRSRSRHEKTSRPK. Residues 1003 to 1006 carry the RFXV motif 1 motif; sequence RFIV. Ser-1007 is modified (phosphoserine). Disordered regions lie at residues 1474–1507 and 1557–1595; these read GQVS…LTKT and IPVT…ASSS. Positions 1477–1496 are enriched in low complexity; the sequence is STPGTHASAPASTATGAKPG. Polar residues predominate over residues 1567–1583; the sequence is STMSSTAVTEAGSQPQK. The short motif at 1604-1607 is the RFXV motif 2 element; the sequence is RFQV. The segment at 1610-1695 is disordered; it reads TMDDAQKERK…TKVGRFQVTT (86 aa). The segment covering 1613–1629 has biased composition (basic and acidic residues); that stretch reads DAQKERKNRSEDTKSVH. The segment covering 1632–1650 has biased composition (low complexity); sequence SSTSESSVLSSSSPESTLV. 2 consecutive short sequence motifs (RFXV motif) follow at residues 1690–1693 and 1702–1705; these read RFQV and RFSV. Residues 1709-1719 are compositionally biased toward basic and acidic residues; the sequence is EDKVTELKKEG. Disordered stretches follow at residues 1709–1783, 1856–1940, and 1952–1990; these read EDKV…LCSK, VIIP…NLYS, and SLSA…KGTF. Position 1723 is a phosphoserine (Ser-1723). Over residues 1738 to 1747 the composition is skewed to basic and acidic residues; it reads PKKEKPELAE. Phosphoserine is present on residues Ser-1755, Ser-1756, Ser-1771, Ser-1773, Ser-1776, and Ser-1865. A compositionally biased stretch (basic residues) spans 1866 to 1878; sequence GRRRRPTKSKGSK. The span at 1879–1889 shows a compositional bias: low complexity; sequence SSRSSSLGNKS. Positions 1890–1940 are enriched in polar residues; that stretch reads PQLSGNLSGQSGTSVLNPQQTLHPPGNTPETGHNQLLQPLKPSPSSDNLYS. Residues 1957-1981 show a composition bias toward low complexity; the sequence is GQGTSSTNTVGGTVSSQAAQAQPPA. An amphipathic alpha-helix region spans residues 1985-2005; the sequence is SRKGTFTDDLHKLVDNWARDA. Ser-2014 and Ser-2030 each carry phosphoserine. Residues 2076-2097 form a disordered region; it reads PFGTQWSGTGGPAPQPLGQFQP. 2 positions are modified to phosphoserine: Ser-2114 and Ser-2116.

The protein belongs to the protein kinase superfamily. Ser/Thr protein kinase family. WNK subfamily. Interacts with WNK3. Interacts with WNK4; inhibiting the activity of WNK4. Interacts with SGK1; promoting its activation. Associates with the mTORC2 complex. Interacts with UVRAG. Interacts (via amphipathic alpha-helix region) with EMC2; promoting the ER membrane protein complex assembly. As to quaternary structure, interacts with isoform 1; inhibiting isoform 1 activity. It depends on Mg(2+) as a cofactor. Post-translationally, autophosphorylated at Ser-378 and Ser-382, promoting its activity. Autophosphorylation at Ser-382 is inhibited by intracellular calcium. Phosphorylation at Thr-58 increases ability to activate SGK1. In terms of processing, ubiquitinated by the BCR(KLHL3) complex, leading to its degradation. Also ubiquitinated by the BCR(KLHL2) complex. May be O-glycosylated.

The protein resides in the cytoplasm. The protein localises to the nucleus. It localises to the cytoskeleton. It is found in the spindle. The enzyme catalyses L-seryl-[protein] + ATP = O-phospho-L-seryl-[protein] + ADP + H(+). The catalysed reaction is L-threonyl-[protein] + ATP = O-phospho-L-threonyl-[protein] + ADP + H(+). Its activity is regulated as follows. Activated in response to hyperosmotic stress: cell shrinkage promotes formation of a membraneless compartment that concentrates WNK1 with its substrates, OXSR1/OSR1 and STK39/SPAK. Activation requires autophosphorylation of Ser-382 and, to a lower extent, Ser-378. Autophosphorylation and subsequent activation is inhibited by increases in intracellular ionic strength: Cl(-) potently inhibits WNK1 kinase activity via direct binding. Also inhibited by K(+) ions. Inhibited by Compound 12 ((5-Chloro-2-(2-((methyl-d3)amino)thiazol-4-yl)- pyridin-4-yl)(4-(4-chlorobenzyl)piperazin-1-yl)methanone). Functionally, serine/threonine-protein kinase component of the WNK1-SPAK/OSR1 kinase cascade, which acts as a key regulator of blood pressure and regulatory volume increase by promoting ion influx. WNK1 mediates regulatory volume increase in response to hyperosmotic stress by acting as a molecular crowding sensor, which senses cell shrinkage and mediates formation of a membraneless compartment by undergoing liquid-liquid phase separation. The membraneless compartment concentrates WNK1 with its substrates, OXSR1/OSR1 and STK39/SPAK, promoting WNK1-dependent phosphorylation and activation of downstream kinases OXSR1/OSR1 and STK39/SPAK. Following activation, OXSR1/OSR1 and STK39/SPAK catalyze phosphorylation of ion cotransporters SLC12A1/NKCC2, SLC12A2/NKCC1, SLC12A5/KCC2 and SLC12A6/KCC3, regulating their activity. Phosphorylation of Na-K-Cl cotransporters SLC12A2/NKCC1 and SLC12A2/NKCC1 promote their activation and ion influx; simultaneously, phosphorylation of K-Cl cotransporters SLC12A5/KCC2 and SLC12A6/KCC3 inhibit their activity, blocking ion efflux. Also acts as a regulator of angiogenesis in endothelial cells. Also acts independently of the WNK1-SPAK/OSR1 kinase cascade by catalyzing phosphorylation of other substrates, such as SYT2, PCF11 and NEDD4L. Mediates phosphorylation of SYT2, regulating SYT2 association with phospholipids and membrane-binding. Regulates mRNA export in the nucleus by mediating phosphorylation of PCF11, thereby decreasing the association between PCF11 and POLR2A/RNA polymerase II and promoting mRNA export to the cytoplasm. Acts as a negative regulator of autophagy. Required for the abscission step during mitosis, independently of the WNK1-SPAK/OSR1 kinase cascade. WNK1 may also play a role in actin cytoskeletal reorganization. Also acts as a scaffold protein independently of its protein kinase activity: negatively regulates cell membrane localization of various transporters and channels, such as SLC4A4, SLC26A6, SLC26A9, TRPV4 and CFTR. Involved in the regulation of epithelial Na(+) channel (ENaC) by promoting activation of SGK1 in a kinase-independent manner. Probably activates SGK1 by acting as a scaffold protein that promotes the recruitment of SGK1 to the mTORC2 complex in response to chloride, leading to mTORC2-dependent phosphorylation and activation of SGK1. Acts as an assembly factor for the ER membrane protein complex independently of its protein kinase activity: associates with EMC2 in the cytoplasm via its amphipathic alpha-helix, and prevents EMC2 ubiquitination and subsequent degradation, thereby promoting EMC2 stabilization. Kinase-defective isoform specifically expressed in kidney, which acts as a dominant-negative regulator of the longer isoform 1. Does not directly inhibit WNK4 and has no direct effect on sodium and chloride ion transport. Down-regulates sodium-chloride cotransporter activity indirectly by inhibiting isoform 1, it associates with isoform 1 and attenuates its kinase activity. In kidney, may play an important role regulating sodium and potassium balance. Its function is as follows. Kinase-defective isoform produced by alternative promoter usage and alternative splicing. This Rattus norvegicus (Rat) protein is Serine/threonine-protein kinase WNK1.